The primary structure comprises 78 residues: Small ribosomal subunit protein bS18 (78 aa).

This sequence belongs to the bacterial ribosomal protein bS18 family. Part of the 30S ribosomal subunit. Forms a tight heterodimer with protein bS6.

Its function is as follows. Binds as a heterodimer with protein bS6 to the central domain of the 16S rRNA, where it helps stabilize the platform of the 30S subunit. The polypeptide is Small ribosomal subunit protein bS18 (Lactobacillus acidophilus (strain ATCC 700396 / NCK56 / N2 / NCFM)).